We begin with the raw amino-acid sequence, 406 residues long: MNAPAKPNDYSAYPDAEGRFGGFGGRYVAETLMPLVLDLGKAYADAKADPEFQAQLKSYNTHYAGRPSPLYFAERLTEHFGGAKIYFKRDELNHTGSHKINNALGQILLAMRMGKTRIIAETGAGQHGVATATVCARFGLPCVVYMGATDVERQKPNVFRMNLLGAEVRPVSSGTGTLKDAMNEAMRDWVTNVHDTYYLIGTAAGPHPYPVMVRDFQSVIGAEAREQILEMEGRLPDAVVACIGGGSNAIGLFHPFLGDEGVRLIGVEAAGHGVSTDKHAASLTGGRPGVLHGNRTYLLQDDDGQIIDAHSISAGLDYPGIGPEHSFLHDIGRAEYVSTTDTEALEAFKLCSTLEGIIPALEPAHALARVGEIAQELGKGKIVVMNLCGRGDKDIFTVAEALGRKI.

N6-(pyridoxal phosphate)lysine is present on K99.

It belongs to the TrpB family. Tetramer of two alpha and two beta chains. It depends on pyridoxal 5'-phosphate as a cofactor.

The catalysed reaction is (1S,2R)-1-C-(indol-3-yl)glycerol 3-phosphate + L-serine = D-glyceraldehyde 3-phosphate + L-tryptophan + H2O. The protein operates within amino-acid biosynthesis; L-tryptophan biosynthesis; L-tryptophan from chorismate: step 5/5. Functionally, the beta subunit is responsible for the synthesis of L-tryptophan from indole and L-serine. The chain is Tryptophan synthase beta chain (trpB) from Caulobacter vibrioides (strain ATCC 19089 / CIP 103742 / CB 15) (Caulobacter crescentus).